A 550-amino-acid chain; its full sequence is Arginine--tRNA ligase (550 aa).

A 'HIGH' region motif is present at residues 124-134 (ANPTGPLHVGH).

It belongs to the class-I aminoacyl-tRNA synthetase family. Monomer.

It localises to the cytoplasm. It catalyses the reaction tRNA(Arg) + L-arginine + ATP = L-arginyl-tRNA(Arg) + AMP + diphosphate. This is Arginine--tRNA ligase from Desulfovibrio desulfuricans (strain ATCC 27774 / DSM 6949 / MB).